A 526-amino-acid polypeptide reads, in one-letter code: MSGFNFGGTGAPAGGFTFGTAKTATTTPATGFSFSASGTGTGGFNFGTPSQPAATTPSTSLFSLTTQTPTTQTPGFNFGTTPASGGTGFSLGISTPKLSLSNAAATPATANTGSFGLGSSTLTNAISSGSTSNQGTAPTGFVFGSSTTSAPSTGSTGFSFTSGSASQPGASGFSLGSVGSSAQPTALSGSPFTPATLVTTTAGATQPAAAAPTAATTSAGSTLFASIAAAPASSSATGLSLPAPVTTAATPSAGTLGFSLKAPGAAPGASTTSTTTTTTTTTTTAAAAAASTTTTGFALSLKPLVSAGPSSVAATALPASSTAAGTATGPAMTYAQLESLINKWSLELEDQERHFLQQATQVNAWDRTLIENGEKITSLHREVEKVKLDQKRLDQELDFILSQQKELEDLLSPLEESVKEQSGTIYLQHADEEREKTYKLAENIDAQLKRMAQDLKDIIEHLNMAGGPADTSDPLQQICKILNAHMDSLQWVDQSSALLQRRVEEASRVCEGRRKEQERSLRIAFD.

S2 carries the post-translational modification N-acetylserine. Repeat copies occupy residues 6–7, 46–47, 78–79, and 115–116. Residues 6 to 144 are 5 X 2 AA repeats of F-G; sequence FGGTGAPAGG…GTAPTGFVFG (139 aa). Residues 43 to 82 are disordered; that stretch reads GFNFGTPSQPAATTPSTSLFSLTTQTPTTQTPGFNFGTTP. Residues 46–81 show a composition bias toward low complexity; sequence FGTPSQPAATTPSTSLFSLTTQTPTTQTPGFNFGTT. A compositionally biased stretch (polar residues) spans 128–137; the sequence is SGSTSNQGTA. The segment at 128-148 is disordered; the sequence is SGSTSNQGTAPTGFVFGSSTT. Copy 5 of the repeat occupies 143 to 144; the sequence is FG. A required for centrosome localization region spans residues 332–462; sequence MTYAQLESLI…QDLKDIIEHL (131 aa). Residues 332-462 adopt a coiled-coil conformation; that stretch reads MTYAQLESLI…QDLKDIIEHL (131 aa). The O-linked (GlcNAc) threonine glycan is linked to T377. A phosphoserine mark is found at S412 and S422. O-linked (GlcNAc) serine glycosylation is present at S472.

Belongs to the nucleoporin NSP1/NUP62 family. Component of the p62 complex, a complex at least composed of NUP62, NUP54, and NUP58. Interacts with NUP88. Interacts with NUTF2. Interacts with HIKESHI. Interacts with OSBPL8. Interacts with CAPG. Interacts with SAS6 and TUBG1 at the centrosome. Interacts with MCM3AP. In terms of processing, O-glycosylated. Post-translationally, the inner channel of the NPC has a different redox environment from the cytoplasm and allows the formation of interchain disulfide bonds between some nucleoporins, the significant increase of these linkages upon oxidative stress reduces the permeability of the NPC.

Its subcellular location is the nucleus. The protein localises to the nuclear pore complex. It localises to the cytoplasm. It is found in the cytoskeleton. The protein resides in the spindle pole. Its subcellular location is the nucleus envelope. The protein localises to the microtubule organizing center. It localises to the centrosome. In terms of biological role, essential component of the nuclear pore complex. The N-terminal is probably involved in nucleocytoplasmic transport. The C-terminal is involved in protein-protein interaction probably via coiled-coil formation, promotes its association with centrosomes and may function in anchorage of p62 to the pore complex. Plays a role in mitotic cell cycle progression by regulating centrosome segregation, centriole maturation and spindle orientation. It might be involved in protein recruitment to the centrosome after nuclear breakdown. The chain is Nuclear pore glycoprotein p62 (Nup62) from Mus musculus (Mouse).